Here is a 119-residue protein sequence, read N- to C-terminus: Large ribosomal subunit protein bL20 (119 aa).

This sequence belongs to the bacterial ribosomal protein bL20 family.

Functionally, binds directly to 23S ribosomal RNA and is necessary for the in vitro assembly process of the 50S ribosomal subunit. It is not involved in the protein synthesizing functions of that subunit. This is Large ribosomal subunit protein bL20 from Streptococcus mutans serotype c (strain ATCC 700610 / UA159).